Consider the following 303-residue polypeptide: Protein SULFUR DEFICIENCY-INDUCED 2 (303 aa).

Positions 62–89 (RVDSALKDMALLMKQQNRAEEAIDAIQS) form a coiled coil. TPR repeat units lie at residues 64 to 97 (DSAL…CSRQ), 100 to 133 (ESLD…IYQG), 160 to 193 (SRIL…EPDA), and 195 to 226 (KACN…ENKE). A coiled-coil region spans residues 232–253 (RLMARVQELLSELKPQEEEAAA).

This sequence belongs to the MS5 protein family.

The protein localises to the nucleus. Its function is as follows. Involved in the utilization of stored sulfate under sulfur-deficient conditions. The sequence is that of Protein SULFUR DEFICIENCY-INDUCED 2 from Arabidopsis thaliana (Mouse-ear cress).